Here is a 359-residue protein sequence, read N- to C-terminus: Mannose-1-phosphate guanylyltransferase (359 aa).

It belongs to the transferase hexapeptide repeat family.

The enzyme catalyses alpha-D-mannose 1-phosphate + GTP + H(+) = GDP-alpha-D-mannose + diphosphate. It functions in the pathway cell wall biogenesis. Its pathway is nucleotide-sugar biosynthesis; GDP-alpha-D-mannose biosynthesis; GDP-alpha-D-mannose from alpha-D-mannose 1-phosphate (GTP route): step 1/1. Catalyzes the formation of GDP-mannose from D-mannose-1-phosphate and GTP. Plays an important role in the synthesis of different glycoconjugates which are responsible for cell wall structure, virulence and immunomodulatory activity of M.tuberculosis. This is Mannose-1-phosphate guanylyltransferase from Mycobacterium tuberculosis (strain ATCC 25618 / H37Rv).